The following is an 834-amino-acid chain: Transcription intermediary factor 1-beta (834 aa).

Residue Ala-2 is modified to N-acetylalanine. Residues 13-23 (AATAASAASGS) are compositionally biased toward low complexity. Residues 13–56 (AATAASAASGSPGSGEGSAGGEKRPAASSAAAASAAASSPAGGG) form a disordered region. A phosphoserine mark is found at Ser-23, Ser-26, and Ser-30. Residue Lys-35 forms a Glycyl lysine isopeptide (Lys-Gly) (interchain with G-Cter in SUMO2) linkage. Low complexity predominate over residues 38-52 (AASSAAAASAAASSP). Phosphoserine is present on Ser-51. The segment at 66–122 (CGVCRERLRPERDPRLLPCLHSACSACLGPATPAAANNSGDGGSAGDGAMVDCPVCK) adopts an RING-type zinc-finger fold. A Glycyl lysine isopeptide (Lys-Gly) (interchain with G-Cter in SUMO2) cross-link involves residue Lys-128. Position 139 is a phosphoserine (Ser-139). The B box-type 1 zinc-finger motif lies at 149 to 196 (DANQCCTSCEDNAPATSYCVECSEPLCETCVEAHQRVKYTKDHTVRST). Zn(2+)-binding residues include Cys-154, Cys-157, Cys-178, and His-182. Residue Lys-200 forms a Glycyl lysine isopeptide (Lys-Gly) (interchain with G-Cter in SUMO2) linkage. The B box-type 2 zinc-finger motif lies at 205–246 (ERTVYCNVHKHEPLVLFCESCDTLTCRDCQLNAHKDHQYQFL). The Zn(2+) site is built by Cys-210, His-213, Cys-233, and His-238. The segment at 247 to 377 (EDAVRNQRKL…LIYFQLHRAL (131 aa)) is leucine zipper alpha helical coiled-coil region. An interaction with MAGEC2 region spans residues 248-377 (DAVRNQRKLL…LIYFQLHRAL (130 aa)). Residues Lys-255 and Lys-262 each participate in a glycyl lysine isopeptide (Lys-Gly) (interchain with G-Cter in SUMO2) cross-link. Lys-267 carries the N6-acetyllysine modification. Lys-273 is covalently cross-linked (Glycyl lysine isopeptide (Lys-Gly) (interchain with G-Cter in SUMO2)). Position 305 is an N6-acetyllysine; alternate (Lys-305). A Glycyl lysine isopeptide (Lys-Gly) (interchain with G-Cter in SUMO2); alternate cross-link involves residue Lys-305. A Glycyl lysine isopeptide (Lys-Gly) (interchain with G-Cter in SUMO2) cross-link involves residue Lys-320. Lys-341 is modified (N6-acetyllysine). A Glycyl lysine isopeptide (Lys-Gly) (interchain with G-Cter in SUMO2) cross-link involves residue Lys-367. An involved in binding PPP1CA region spans residues 367–371 (KLIYF). An N6-acetyllysine; alternate modification is found at Lys-378. Residue Lys-378 forms a Glycyl lysine isopeptide (Lys-Gly) (interchain with G-Cter in SUMO2); alternate linkage. Lys-378 is covalently cross-linked (Glycyl lysine isopeptide (Lys-Gly) (interchain with G-Cter in SUMO1); alternate). Lys-408 participates in a covalent cross-link: Glycyl lysine isopeptide (Lys-Gly) (interchain with G-Cter in SUMO2). The interval 412–480 (ERPGTNSTGP…SRSGEGEVSG (69 aa)) is disordered. Ser-418 is modified (phosphoserine). A Glycyl lysine isopeptide (Lys-Gly) (interchain with G-Cter in SUMO2) cross-link involves residue Lys-435. Residues 435–444 (KQGSGSSQPM) are compositionally biased toward polar residues. Phosphoserine occurs at positions 438, 440, and 454. Residue Lys-469 forms a Glycyl lysine isopeptide (Lys-Gly) (interchain with G-Cter in SUMO2); alternate linkage. A Glycyl lysine isopeptide (Lys-Gly) (interchain with G-Cter in SUMO1); alternate cross-link involves residue Lys-469. At Arg-470 the chain carries Citrulline. Ser-471 carries the post-translational modification Phosphoserine. At Arg-472 the chain carries Citrulline. A phosphoserine mark is found at Ser-473, Ser-479, and Ser-489. The interval 476–513 (GEVSGLLRKVPRVSLERLDLDLTSDSQPPVFKVFPGST) is HP1 box. Positions 481–494 (LLRKVPRVSLERLD) match the PxVxL motif motif. Thr-498 carries the phosphothreonine modification. Ser-501 carries the post-translational modification Phosphoserine. Lys-507 is covalently cross-linked (Glycyl lysine isopeptide (Lys-Gly) (interchain with G-Cter in SUMO2)). Lys-554 participates in a covalent cross-link: Glycyl lysine isopeptide (Lys-Gly) (interchain with G-Cter in SUMO2); alternate. Residue Lys-554 forms a Glycyl lysine isopeptide (Lys-Gly) (interchain with G-Cter in SUMO); alternate linkage. Residue Lys-575 forms a Glycyl lysine isopeptide (Lys-Gly) (interchain with G-Cter in SUMO2) linkage. A disordered region spans residues 581–602 (LTEGPGAEGPRLASPSGSTSSG). Ser-594 is modified (phosphoserine). The PHD-type zinc finger occupies 625–672 (ATICRVCQKPGDLVMCNQCEFCFHLDCHLPALQDVPGEEWSCSLCHVL). Lys-676 participates in a covalent cross-link: Glycyl lysine isopeptide (Lys-Gly) (interchain with G-Cter in SUMO). Phosphoserine occurs at positions 683, 689, and 697. The region spanning 695–799 (KLSPANQRKC…RFFETRMNDA (105 aa)) is the Bromo domain. Lys-750 is covalently cross-linked (Glycyl lysine isopeptide (Lys-Gly) (interchain with G-Cter in SUMO2); alternate). A Glycyl lysine isopeptide (Lys-Gly) (interchain with G-Cter in SUMO1); alternate cross-link involves residue Lys-750. A Glycyl lysine isopeptide (Lys-Gly) (interchain with G-Cter in SUMO); alternate cross-link involves residue Lys-750. Ser-752 is modified (phosphoserine). At Tyr-755 the chain carries Phosphotyrosine. Ser-757 is subject to Phosphoserine. Residues Lys-770, Lys-774, and Lys-779 each carry the N6-acetyllysine; alternate modification. Glycyl lysine isopeptide (Lys-Gly) (interchain with G-Cter in SUMO2); alternate cross-links involve residues Lys-770, Lys-774, and Lys-779. A Glycyl lysine isopeptide (Lys-Gly) (interchain with G-Cter in SUMO1); alternate cross-link involves residue Lys-779. Ser-784 is modified (phosphoserine). A Glycyl lysine isopeptide (Lys-Gly) (interchain with G-Cter in SUMO2) cross-link involves residue Lys-804. Phosphoserine; by ATM and ATR and dsDNA kinase is present on Ser-824.

It belongs to the TRIM/RBCC family. In terms of assembly, oligomer; the RBCC domain homotrimerizes and interacts with one molecule of KRAB to form the KRAB-KAP1 corepressor complex. Interacts with SETX. Binding to a KRAB domain is an absolute requirement for silencing gene expression. Interacts with a number of KRAB-ZFP proteins including ZNF10, ZFP53, ZFP68, ZNF382 and ZNF256. Interacts with NCOR1, NR3C1 and CHD3. Interacts with CEBPB (via the RING-type and PHD-type zinc fingers). Interacts with CBX5 (via the PxVxL motif); the interaction occurs in interphase nuclei and competes for binding POGZ. Interacts with POGZ; the interaction competes for interaction with CBX5. Interacts with SETDB1; the interaction is enhanced by KAP1 sumoylation, stimulates SETDB1 histone methyltransferase activity and gene silencing. Interacts (via the PHD-type zinc finger) with UBE2I; the interaction is required for sumoylation and repressor activity. Component of the TRIM28/KAP1-ERBB4-MDM2 complex involved in connecting growth factor and DNA damage responses. Interacts directly with ERBB4; the interaction represses ERBB4-mediated transcription activity. Interacts with MDM2; the interaction contributes to p53/TP53 inactivation. Component of the TRIM28/KAP1-MDM2-p53/TP53; involved in regulating p53/TP53 stabilization and activity. Interacts (via the leucine zipper alpha helical coiled-coil) with E2F1 (central region); the interaction inhibits E2F1 acetylation and transcriptional activity. Interacts with PPP1CA; the interaction dephosphorylates TRIM28 at Ser-824 and forms a complex at the p21 promoter site. Interacts with PPP1CB; the interaction is weak but is increased on dephosphorylation at Ser-824. Interacts with CEBPB and NR3C1. Interacts with CBX5 (via the PxVxL motif); the interaction occurs in interphase nuclei and competes for binding POGZ. Component of a ternary complex that includes TRIM28, a HP1 protein (CBX1, CBX3 OR CBX5), a KRAB domain-containing protein, and DNA. Interacts with SMARCAD1. Interacts with, and sumoylates IRF7. Interacts with MAGEC2. Part of a complex composed of TRIM28, HDAC1, HDAC2 and EHMT2. Interacts (via the RBCC domain) with KOX1 (via the KRAB domain), ZNF268 (via the KRAB domain) and ZNF300 (via the KRAB domain); the interactions increase KOX1, ZNF268 and ZNF300 nuclear localization activities. Interacts with AICDA. The large PER complex involved in the histone methylation is composed of at least PER2, CBX3, TRIM28, SUV39H1 and/or SUV39H2; CBX3 mediates the formation of the complex. Interacts with NR4A3; the interactions potentiates NR4A3 activity on NurRE promoter. Interacts (unphosphorylated or phosphorylated form) with ZBTB1 (via BTB domain). Probably part of a corepressor complex containing ZNF304, TRIM28, SETDB1 and DNMT1. Interacts with ATRX. Forms a complex with ATRX, SETDB1 and ZNF274. Interacts with ZFP568; the interaction mediates ZFP568 transcriptional repression activity. Interacts with RRP1B. Interacts with CRY1. Interacts with ZNF263; recruited to the SIX3 promoter along with other proteins involved in chromatin modification and transcriptional corepression where it contributes to transcriptional repression. Interacts with CYREN (via XLF motif). Interacts with TRIM17; this interaction prevents TRIM28 activity. Interacts with ZNF746. Interacts with PHF13. Interacts with ZNF354C. Interacts with ZNF432; the interaction is independent of PARP1. Post-translationally, ATM-induced phosphorylation on Ser-824 represses sumoylation leading to the de-repression of expression of a subset of genes involved in cell cycle control and apoptosis in response to genotoxic stress. Dephosphorylation by the phosphatases, PPP1CA and PP1CB forms, allows sumoylation and expression of TRIM28 target genes. In terms of processing, sumoylation/desumoylation events regulate TRIM28-mediated transcriptional repression. Sumoylation is required for interaction with CHD3 and SETDB1 and the corepressor activity. Represses and is repressed by Ser-824 phosphorylation. Enhances the TRIM28 corepressor activity, inhibiting transcriptional activity of a number of genes including GADD45A and CDKN1A/p21. Lys-554, Lys-779 and Lys-804 are the major sites of sumoylation. In response to Dox-induced DNA damage, enhanced phosphorylation on Ser-824 prevents sumoylation and allows de-repression of CDKN1A/p21. Auto-ubiquitinated; enhanced by MAGEA2 and MAGEC2. Post-translationally, citrullinated by PADI4. In terms of processing, ADP-ribosylated by SIRT6, promoting TRIM28/KAP1 interaction with CBX5, thereby contributing to the packaging of LINE-1 retrotransposon elements into transcriptionally repressive heterochromatin.

The protein localises to the nucleus. It catalyses the reaction S-ubiquitinyl-[E2 ubiquitin-conjugating enzyme]-L-cysteine + [acceptor protein]-L-lysine = [E2 ubiquitin-conjugating enzyme]-L-cysteine + N(6)-ubiquitinyl-[acceptor protein]-L-lysine.. Its pathway is protein modification; protein sumoylation. In terms of biological role, nuclear corepressor for KRAB domain-containing zinc finger proteins (KRAB-ZFPs). Mediates gene silencing by recruiting CHD3, a subunit of the nucleosome remodeling and deacetylation (NuRD) complex, and SETDB1 (which specifically methylates histone H3 at 'Lys-9' (H3K9me)) to the promoter regions of KRAB target genes. Enhances transcriptional repression by coordinating the increase in H3K9me, the decrease in histone H3 'Lys-9 and 'Lys-14' acetylation (H3K9ac and H3K14ac, respectively) and the disposition of HP1 proteins to silence gene expression. Recruitment of SETDB1 induces heterochromatinization. May play a role as a coactivator for CEBPB and NR3C1 in the transcriptional activation of ORM1. Also a corepressor for ERBB4. Inhibits E2F1 activity by stimulating E2F1-HDAC1 complex formation and inhibiting E2F1 acetylation. May serve as a partial backup to prevent E2F1-mediated apoptosis in the absence of RB1. Important regulator of CDKN1A/p21(CIP1). Has E3 SUMO-protein ligase activity toward itself via its PHD-type zinc finger. Specifically sumoylates IRF7, thereby inhibiting its transactivation activity. Ubiquitinates p53/TP53 leading to its proteasomal degradation; the function is enhanced by MAGEC2 and MAGEA2, and possibly MAGEA3 and MAGEA6. Mediates the nuclear localization of KOX1, ZNF268 and ZNF300 transcription factors. Probably forms a corepressor complex required for activated KRAS-mediated promoter hypermethylation and transcriptional silencing of tumor suppressor genes (TSGs) or other tumor-related genes in colorectal cancer (CRC) cells. Required to maintain a transcriptionally repressive state of genes in undifferentiated embryonic stem cells (ESCs). In ESCs, in collaboration with SETDB1, is also required for H3K9me3 and silencing of endogenous and introduced retroviruses in a DNA-methylation independent-pathway. Associates at promoter regions of tumor suppressor genes (TSGs) leading to their gene silencing. The SETDB1-TRIM28-ZNF274 complex may play a role in recruiting ATRX to the 3'-exons of zinc-finger coding genes with atypical chromatin signatures to establish or maintain/protect H3K9me3 at these transcriptionally active regions. Acts as a corepressor for ZFP568. This is Transcription intermediary factor 1-beta from Mus musculus (Mouse).